A 480-amino-acid chain; its full sequence is Sensor histidine kinase CusS (480 aa).

Residues 1–15 (MVSKPFQRPFSLATR) are Cytoplasmic-facing. Residues 16–36 (LTFFISLATIAAFFAFAWIMI) traverse the membrane as a helical segment. Residues 37 to 186 (HSVKVHFAEQ…LHYINDLMNK (150 aa)) lie on the Periplasmic side of the membrane. A helical transmembrane segment spans residues 187–207 (LIMTASVISILIVFIVLLAVH). An HAMP domain is found at 207 to 260 (HKGHAPIRSVSRQIQNITSKDLDVRLDPQTVPIELEQLVLSFNHMIERIEDVFT). Over 208–480 (KGHAPIRSVS…GTRFVIILPA (273 aa)) the chain is Cytoplasmic. Positions 268–480 (DIAHEIRTPI…GTRFVIILPA (213 aa)) constitute a Histidine kinase domain. Histidine 271 is modified (phosphohistidine; by autocatalysis).

In terms of processing, autophosphorylated.

It localises to the cell inner membrane. It catalyses the reaction ATP + protein L-histidine = ADP + protein N-phospho-L-histidine.. Its function is as follows. Member of the two-component regulatory system CusS/CusR involved in response to copper and silver. Acts as a copper/silver ion sensor. Activates CusR by phosphorylation. The sequence is that of Sensor histidine kinase CusS (cusS) from Escherichia coli O6:H1 (strain CFT073 / ATCC 700928 / UPEC).